The following is a 411-amino-acid chain: Serine hydroxymethyltransferase (411 aa).

(6S)-5,6,7,8-tetrahydrofolate-binding positions include L119 and G123 to L125. K228 is modified (N6-(pyridoxal phosphate)lysine).

The protein belongs to the SHMT family. In terms of assembly, homodimer. Pyridoxal 5'-phosphate is required as a cofactor.

The protein localises to the cytoplasm. The enzyme catalyses (6R)-5,10-methylene-5,6,7,8-tetrahydrofolate + glycine + H2O = (6S)-5,6,7,8-tetrahydrofolate + L-serine. Its pathway is one-carbon metabolism; tetrahydrofolate interconversion. The protein operates within amino-acid biosynthesis; glycine biosynthesis; glycine from L-serine: step 1/1. In terms of biological role, catalyzes the reversible interconversion of serine and glycine with tetrahydrofolate (THF) serving as the one-carbon carrier. This reaction serves as the major source of one-carbon groups required for the biosynthesis of purines, thymidylate, methionine, and other important biomolecules. Also exhibits THF-independent aldolase activity toward beta-hydroxyamino acids, producing glycine and aldehydes, via a retro-aldol mechanism. This chain is Serine hydroxymethyltransferase, found in Clostridium kluyveri (strain NBRC 12016).